A 5068-amino-acid chain; its full sequence is MGNEASLEGEGLPEGLAAAAGGAGGSGSALHPGIPAGMEADLSQLSEEERRQIAAVMSRAQGLPKGSVPAAAAESPSMHRKQELDSSQAPQQPGKPPDPGRPPQHGLSKSRTTDTFRSEQKLPGRSPSTISLKESKSRTDFKEEYKSSMMPGFFSDVNPLSAVSSVVNKFNPFDLISDSEAVQEETTKKQKVAQKDQGKSEGITKPSLQQPSPKLIPKQQGPGKEVIPQDIPSKSVSSQQAEKTKPQAPGTAKPSQQSPAQTPAQQAKPVAQQPGPAKATVQQPGPAKSPAQPAGTGKSPAQPPVTAKPPAQQAGLEKTSLQQPGPKSLAQTPGQGKVPPGPAKSPAQQPGTAKLPAQQPGPQTAAKVPGPTKTPAQLSGPGKTPAQQPGPTKPSPQQPIPAKPQPQQPVATKPQPQQPAPAKPQPQHPTPAKPQPQHPTPAKPQPQQPTPAKPQPQQPTPAKPQPQQPTPAKPQPQHPTPAKPQPQQPGLGKPSAQQPSKSISQTVTGRPLQAPPTSAAQAPAQGLSKTICPLCNTTELLLHTPEKANFNTCTECQSTVCSLCGFNPNPHLTEIKEWLCLNCQMQRALGGELAAIPSSPQPTPKAASVQPATASKSPVPSQQASPKKELPSKQDSPKAPESKKPPPLVKQPTLHGPTPATAPQPPVAEALPKPAPPKKPSAALPEQAKAPVADVEPKQPKTTETLTDSPSSAAATSKPAILSSQVQAQAQVTTAPPLKTDSAKTSQSFPPTGDTITPLDSKAMPRPASDSKIVSHPGPTSESKDPVQKKEEPKKAQTKVTPKPDTKPVPKGSPTPSGTRPTTGQATPQSQQPPKPPEQSRRFSLNLGGIADAPKSQPTTPQETVTGKLFGFGASIFSQASNLISTAGQQAPHPQTGPAAPSKQAPPPSQTLAAQGPPKSTGPHPSAPAKTTAVKKETKGPAAENLEAKPVQAPTVKKAEKDKKPPPGKVSKPPPTEPEKAVLAQKPDKTTKPKPACPLCRTELNVGSQDPPNFNTCTECKNQVCNLCGFNPTPHLTEIQEWLCLNCQTQRAISGQLGDMDKMPPASSGPKASPVPAPAEPPPQKTPTAAHAKGKKKETEVKAETEKQIPEKETPSIEKTPPAVATDQKLEESEVTKSLVSVLPEKKPSEEEKALPADKKEKKPPAAEAPPLEEKKPIPDDQKLPPDAKPSASEGEEKRDLLKAHVQIPEEGPIGKVASLACEGEQQPDTRPEDLPGATPQTLPKDRQKESRDVTQPQAEGTAKEGRGEPSKDRTEKEEDKSDTSSSQQPKSPQGLSDTGYSSDGISGSLGEIPSLIPSDEKDLLKGLKKDSFSQESSPSSPSDLAKLESTVLSILEAQASTLVGEKAEKKTQPQKVSPEQPQDQQKTQTPSETRDISISEEEIKESQEKKVTSKKDSAQGFPSRKEHKENPELVDDLSPRRASYDSVEDSSESENSPVARRKRRTSIGSSSSEEYKQEDSQGSGEDEDFIRKQIIEMSADEDASGSEDEEFIRSQLKEIGGVTESQKREETKGKGKSPAGKHRRLTRKSSTSFDDDAGRRHSWHDEDDETFDESPELKFRETKSQESEELVVAGGGGLRRFKTIELNSTVTDKYSAESSQKKTTLYFDEEPELEMESLTDSPEDRSRGEGSSSLHASSFTPGTSPTSVSSLDEDSDSSPSHKKGESKQQRKARHRSHGPLLPTIEDSSEEEELREEEELLKEQEKQRELEQQQRKSSSKKSKKDKDELRAQRRRERPKTPPSNLSPIEDASPTEELRQAAEMEELHRSSCSEYSPSIESDPEGFEISPEKIIEVQKVYKLPTAVSLYSPTDEQSVMQKEGAQKALKSAEEMYEEMMHKPHKYKAFPAANERDEVFEKEPLYGGMLIEDYIYESLVEDTYNGSVDGSLLTRQDEQNGFMQQRGREQKIRLQEQIYDDPMQKITDLQKEFYELESLHSIVPQEDIVSSSYIIPESHEIVDLGSMVTSTSEEKKLLDADAAYEELMKRQQMQVTDGSSLIQTTMGDDMAESTLDFDRVQDASLTSSILSGASLTDSTSSATLSIPDVKITQHFSTEEFEDEYVTDYTREIQEIIAHESLILTYSEPSESATSVPPSDTPSLTSSISSVCTTDSSSPVTTLDSLTTVYTEPADVITKFKDSEEISSTYFPGSVIDYPEDIGVSLDRTITPESRTNADQIMISFPGIAPSITESVATKPERPQADTISTDLPISEKELIKGKKETGDGIILEVLDAYKDKREESEAELTKISLPETGLAPTPSSQTKEQPGSPHSVSGEILGQEKPTYRSPSGGLPVSTHPSKSHPFFRSSSLDISAQPPPPPPPPPPPPPPPPPPPPPPLPPATSPKPPTYPKRKLAAAAPVAPTAIVTAHADAIPTVEATAARRSNGLPATKICAAAPPPVPPKPSSIPTGLVFTHRPEASKPPIAPKPAVPEIPVTTQKTTDTCPKPTGLPLTSNMSLNLVTSADYKLPSPTSPLSPHSNKSSPRYSKSLMETYVVITLPSEPGTPTDSSAAQAITSWPLGSPPKDLVSLETVFSVVPPMTSTEIPSASQPTLYTSGALGTFSVTPAVTASLFQTVPTSLTQFLPAEASKPEVSAVSSAVPSVAPRSVSIPIPPEPLALDRHQYKENGKLPLIGDAIDLRTIPKSEVKVTEKCMDLSASAMDVKRQTTANEVYRRQISAVQPSIINLSAASSLGTPVTMDSKTVAVVTCTDTTIYTTGTESQVGIEHAVTSPLQLTTSKHTELQYRKPSSQAFPMIRDEAPINLSLGPSTQAVTLAVTKPVTVPPVGVTNGWTDSTISQGITDGEVVDLSTSKSHRTVVTMDESTSNVVTKIIEDEEKPVDLTAGRRAVCCDMVYKLPFGRSCTAQQPATTLPEDRFGYRDDHYQYDRSGPYGYRGIGGMKPSMSDTNLAEAGHFFYKSKNAFDYSGGTEAAVDLTSGRVSTGEVMDYSSKTTGPYPETRQVISGVGISTPQYSTARMTPPPGPQYGVGSVLRSSNGVVYSSVATPIPSTFAITTQPGSIFSTTVRDLSGIHTTDAITSLSALHQSQPMPRSYFITTGASETDISVTSIDINASLQTITMETLPAETMDSVPTLTTASEVFSEVVGEESTLLIVPDEDKQQQQLDLERELLELEKIKQQRFAEELEWERQEIQRFREQEKIMVQKKLEELQSMKQHLLYQQEEERQAQFMMRQETLAQQQLQLEQIQQLQQQLHQQLEEQKLRQIYQYNYEPSGTASPQTTTEQAILEGQYVATEGSQFWATEDATTTASTVVAIEIPQSQGWYTVQSDGVTQYIAPPGILSTVSEIPLTDVVVKEEKQPKKRSSGAKVRGQYDEMGESMADDPRNLKKIVDSGVQTDDEETADRTYASRRRRTKKSVDTSVQTDDEDQDEWDMPSRSRRKARTGKYGDSTAEGDKTKPPSKVSSVAVQTVAEISVQTEPLGTIRTPSIRARVDAKVEIIKHISAPEKTYKGGSLGCQTETDPDTQSPPYMGATSPPKDKKRPTPLEIGYSSSHLRADPTVQLAPSPPKSPKVLYSPISPLSPGHALEPAFVPYEKPLPDDISPQKVLHPDMAKVPPASPKTAKMMQRSMSDPKPLSPTADESSRAPFQYSEGFTAKGSQTTSGTQKKVKRTLPNPPPEEASTGTQSTYSTMGTASRRRMCRTNTMARAKILQDIDRELDLVERESAKLRKKQAELDEEEKEIDAKLRYLEMGINRRKEALLKEREKRERAYLQGVAEDRDYMSDSEVSSTRPSRVESQHGIERPRTAPQTEFSQFIPPQTQTEAQLVPPTSPYTQYQYSSPALPTQAPTPYTQQSHFQQQTLYHQQVSPYQTQPTFQAVATMSFTPQAQPTPTPQPSYQLPSQMMVIQQKPRQTTLYLEPKITSTYEVIRNQPLMIAPVSTDNTYAVSHLGSKYNSLDLRIGLEERSSMASSPISSISADSFYADIDHHTSRNYVLIDDIGDITKGTAALSSAFSLHEKDLSKTDRLLRTTETRRSQEVTDFLAPLQTSSRLHSYVKAEEDSMEDPYELKLLKHQIKQEFRRGTESLDHLAGLSHYYHADTSYRHFPKSEKYSISRLTLEKQAAKQLPAAILYQKQSKHKKALIDPKMSKFSPIQESRDLEPDYPTYLSSSTSSIGGISSRARLLQDDITFGLRKNITDQQKFMGSSLGSGLGTLGNTIRSALQDEADKPYSSGSRSRPSSRPSSVYGLDLSIKRDSSSSSLRLKAQEAEALDVSFGHSSSSARTKPTSLPISQSRGRIPIVAQNSEEESPLSPVGQPMGMARAAAGPLPPISADTRDQFGSSHSLPEVQQHMREESRTRGYDRDIAFIMDDFQHAMSDSEAYHLRREETDWFDKPRESRLENGHGLDRKLPERLVHSRPLSQHQEQILQMNGKTMHYIFPHARIKITRDSKDHTVSGNGLGIRIVGGKEIPGHSGEIGAYIAKILPGGSAEHSGKLIEGMQVLEWNGIPLTSKTYEEVQSIINQQSGEAEICVRLDLNMLSDSENPQHLELHEPPKVVDKAKSPGVDPKQLAAELQKVSLQQSPLVMSSVVEKGAHAHSGPTSAGSSSVPSPGQPGSPSVSKKKHGGSKPTDVSKTASHPITGEIQLQINYDLGNLIIHILQARNLVPRDNNGYSDPFVKVYLLPGRGQVMVVQNASVEYKRRTKYVQKSLNPEWNQTVIYKSISMEQLMKKTLEVTVWDYDRFSSNDFLGEVLIDLSSTSHLDNTPRWYPLKEQTESIEHGKSHSSQNSQQSPKPSVIKSRSHGIFPDPSKDMQVPTIEKSHSSPGSSKSSSEGHLRSHGPSRSQSKTSVAQTHLEDAGAAIAAAEAAVQQLRIQPTKPTNHRPAETSVSTGSSGSSVGSGYSVDSEGSSCVAGEPNLLPIPRIGKMGQNGQDPVKQPGMGAADTEAKTQVMGEIKLALKKEMKTDGEQLIVEILQCRNITYKFKSPDHLPDLYVKIYVINIATQKKVIKKKTRVCRHDREPSFNETFRFSLSPAGHSLQILLFSNGGKFMKKTLIGEACIWLDKVDLRKRIVNWHKLLMSPTQTH.

Residues 1 to 20 (MGNEASLEGEGLPEGLAAAA) are compositionally biased toward low complexity. 2 disordered regions span residues 1–143 (MGNE…DFKE) and 173–524 (FDLI…QAPA). Positions 93–102 (PGKPPDPGRP) are enriched in pro residues. Composition is skewed to basic and acidic residues over residues 111–122 (RTTDTFRSEQKL), 133–143 (KESKSRTDFKE), and 185–199 (ETTKKQKVAQKDQGK). S212 bears the Phosphoserine mark. Residues 232–241 (PSKSVSSQQA) show a composition bias toward polar residues. Residues 252–279 (AKPSQQSPAQTPAQQAKPVAQQPGPAKA) are compositionally biased toward low complexity. Positions 319–334 (TSLQQPGPKSLAQTPG) are enriched in polar residues. 2 stretches are compositionally biased toward pro residues: residues 391-407 (PTKPSPQQPIPAKPQPQ) and 416-487 (PQQP…PQPQ). Residues 401–500 (PAKPQPQQPV…LGKPSAQQPS (100 aa)) form a 10 X 10 AA tandem approximate repeats of P-A-K-P-Q-P-Q-Q-P-X region. Residues 495-508 (SAQQPSKSISQTVT) show a composition bias toward polar residues. Residues 515-524 (PPTSAAQAPA) are compositionally biased toward low complexity. A C4-type zinc finger spans residues 532–556 (CPLCNTTELLLHTPEKANFNTCTEC). Disordered stretches follow at residues 594–867 (AAIP…TVTG), 883–1005 (LIST…TELN), 1057–1345 (LGDM…PSDL), and 1364–1803 (VGEK…SDPE). Polar residues predominate over residues 610-625 (QPATASKSPVPSQQAS). The segment covering 626–644 (PKKELPSKQDSPKAPESKK) has biased composition (basic and acidic residues). A compositionally biased stretch (low complexity) spans 709–738 (SPSSAAATSKPAILSSQVQAQAQVTTAPPL). Residues 782 to 795 (ESKDPVQKKEEPKK) are compositionally biased toward basic and acidic residues. The span at 809 to 830 (VPKGSPTPSGTRPTTGQATPQS) shows a compositional bias: low complexity. 2 positions are modified to phosphoserine: S844 and S856. Composition is skewed to polar residues over residues 856–865 (SQPTTPQETV) and 883–893 (LISTAGQQAPH). Residue T860 is modified to Phosphothreonine. The C4-type zinc-finger motif lies at 997 to 1020 (CPLCRTELNVGSQDPPNFNTCTEC). The segment covering 1073–1085 (SPVPAPAEPPPQK) has biased composition (pro residues). Residues 1097–1116 (KETEVKAETEKQIPEKETPS) are compositionally biased toward basic and acidic residues. Position 1120 is a phosphothreonine (T1120). 4 stretches are compositionally biased toward basic and acidic residues: residues 1144-1165 (PEKKPSEEEKALPADKKEKKPP), 1172-1186 (LEEKKPIPDDQKLPP), 1244-1253 (PKDRQKESRD), and 1262-1283 (TAKEGRGEPSKDRTEKEEDKSD). Positions 1290-1306 (PKSPQGLSDTGYSSDGI) are enriched in polar residues. S1292, S1302, S1303, S1332, S1334, S1337, S1338, and S1341 each carry phosphoserine. Basic and acidic residues predominate over residues 1319 to 1333 (SDEKDLLKGLKKDSF). The segment covering 1334–1343 (SQESSPSSPS) has biased composition (low complexity). Over residues 1374–1392 (PQKVSPEQPQDQQKTQTPS) the composition is skewed to polar residues. A compositionally biased stretch (basic and acidic residues) spans 1405–1444 (KESQEKKVTSKKDSAQGFPSRKEHKENPELVDDLSPRRAS). S1439, S1451, S1452, S1454, S1457, S1481, S1484, S1505, and S1507 each carry phosphoserine. Residues 1499–1511 (SADEDASGSEDEE) are compositionally biased toward acidic residues. T1552 is subject to Phosphothreonine. Phosphoserine occurs at positions 1553, 1563, and 1575. Residues 1566 to 1575 (DEDDETFDES) show a composition bias toward acidic residues. Residues 1576 to 1587 (PELKFRETKSQE) show a composition bias toward basic and acidic residues. Positions 1606–1624 (ELNSTVTDKYSAESSQKKT) are enriched in polar residues. Residues 1628–1638 (FDEEPELEMES) show a composition bias toward acidic residues. S1638 carries the phosphoserine modification. Phosphothreonine is present on T1640. Phosphoserine is present on residues S1642 and S1647. Residues 1650 to 1667 (EGSSSLHASSFTPGTSPT) are compositionally biased toward polar residues. The segment covering 1707–1720 (DSSEEEELREEEEL) has biased composition (acidic residues). S1708 and S1709 each carry phosphoserine. A compositionally biased stretch (basic and acidic residues) spans 1721–1734 (LKEQEKQRELEQQQ). At T1760 the chain carries Phosphothreonine. S1766 bears the Phosphoserine mark. A compositionally biased stretch (basic and acidic residues) spans 1775 to 1790 (EELRQAAEMEELHRSS). Phosphoserine occurs at positions 1795, 1800, 1808, and 1829. 2 disordered regions span residues 2104–2126 (PSESATSVPPSDTPSLTSSISSV) and 2261–2377 (EAEL…AAAA). Positions 2109 to 2126 (TSVPPSDTPSLTSSISSV) are enriched in low complexity. The span at 2277-2291 (TPSSQTKEQPGSPHS) shows a compositional bias: polar residues. Over residues 2334–2368 (QPPPPPPPPPPPPPPPPPPPPPPLPPATSPKPPTY) the composition is skewed to pro residues. Phosphoserine is present on S2495. T2686 carries an O-linked (GlcNAc) threonine glycan. S2960 carries an O-linked (GlcNAc) serine glycan. At T2998 the chain carries Phosphothreonine. Disordered regions lie at residues 3334-3443 (KEEK…SKVS) and 3490-3556 (KGGS…LYSP). S3358 bears the Phosphoserine mark. A compositionally biased stretch (basic and acidic residues) spans 3361-3370 (DDPRNLKKIV). S3372 bears the Phosphoserine mark. Residues T3376 and T3403 each carry the phosphothreonine modification. A compositionally biased stretch (acidic residues) spans 3403-3412 (TDDEDQDEWD). The span at 3495 to 3507 (GCQTETDPDTQSP) shows a compositional bias: polar residues. Phosphoserine is present on residues S3506, S3514, S3545, S3549, S3555, S3558, S3561, S3582, S3608, S3610, and S3616. Disordered regions lie at residues 3576 to 3679 (PLPD…RRRM) and 3760 to 3797 (DYMSDSEVSSTRPSRVESQHGIERPRTAPQTEFSQFIP). 2 stretches are compositionally biased toward polar residues: residues 3636 to 3645 (KGSQTTSGTQ) and 3661 to 3673 (STGTQSTYSTMGT). S3763 bears the Phosphoserine mark. Residues 3773-3785 (SRVESQHGIERPR) show a composition bias toward basic and acidic residues. Polar residues predominate over residues 3787-3797 (APQTEFSQFIP). S4016, S4042, and S4132 each carry phosphoserine. Disordered stretches follow at residues 4207–4231 (ADKPYSSGSRSRPSSRPSSVYGLDL) and 4254–4273 (VSFGHSSSSARTKPTSLPIS). Residues 4210-4231 (PYSSGSRSRPSSRPSSVYGLDL) are compositionally biased toward low complexity. The segment covering 4257–4273 (GHSSSSARTKPTSLPIS) has biased composition (polar residues). Residues S4286, S4290, S4293, S4322, and S4358 each carry the phosphoserine modification. The interval 4317 to 4339 (RDQFGSSHSLPEVQQHMREESRT) is disordered. Residues 4424-4518 (RIKITRDSKD…EAEICVRLDL (95 aa)) form the PDZ domain. The segment at 4574-4620 (KGAHAHSGPTSAGSSSVPSPGQPGSPSVSKKKHGGSKPTDVSKTASH) is disordered. Residues 4578-4601 (AHSGPTSAGSSSVPSPGQPGSPSV) show a composition bias toward low complexity. Phosphoserine is present on S4592. Residues 4622–4751 (ITGEIQLQIN…SHLDNTPRWY (130 aa)) form the C2 1 domain. Residues D4651 and D4657 each contribute to the Ca(2+) site. S4706 is modified (phosphoserine). Residues D4721, D4723, S4726, and D4729 each coordinate Ca(2+). Disordered regions lie at residues 4758–4834 (ESIE…SVAQ) and 4857–4891 (QPTKPTNHRPAETSVSTGSSGSSVGSGYSVDSEGS). Composition is skewed to low complexity over residues 4766–4778 (HSSQNSQQSPKPS) and 4805–4815 (SSPGSSKSSSE). The span at 4823–4834 (PSRSQSKTSVAQ) shows a compositional bias: polar residues. The span at 4870–4891 (SVSTGSSGSSVGSGYSVDSEGS) shows a compositional bias: low complexity. The 126-residue stretch at 4933–5058 (VMGEIKLALK…DLRKRIVNWH (126 aa)) folds into the C2 2 domain.

In terms of assembly, interacts with BSN, ERC2/CAST1, RIMS1 and UNC13A. Interacts (via C-terminus) with TRIO (via N-terminus). Interacts with CTBP1. Interacts with SIAH1; this interaction negatively regulates SIAH1 E3 ligase activity. Directly interacts with GIT1 and GIT2. It depends on Ca(2+) as a cofactor. As to expression, highly expressed in brain. Moderately expressed in pituitary gland and pancreatic islets. Low levels found in stomach.

It localises to the presynaptic active zone. In terms of biological role, scaffold protein of the presynaptic cytomatrix at the active zone (CAZ) which is the place in the synapse where neurotransmitter is released. After synthesis, participates in the formation of Golgi-derived membranous organelles termed Piccolo-Bassoon transport vesicles (PTVs) that are transported along axons to sites of nascent synaptic contacts. At the presynaptic active zone, regulates the spatial organization of synaptic vesicle cluster, the protein complexes that execute membrane fusion and compensatory endocytosis. Organizes as well the readily releasable pool of synaptic vesicles and safeguards a fraction of them to be not immediately available for action potential-induced release. Also functions in processes other than assembly such as the regulation of specific presynaptic protein ubiquitination by interacting with SIAH1 or the regulation of presynaptic autophagy. Also mediates synapse to nucleus communication leading to reconfiguration of gene expression by associating with the transcriptional corepressor CTBP1 and by subsequently reducing the size of its pool available for nuclear import. This is Protein piccolo from Mus musculus (Mouse).